The chain runs to 442 residues: Putative protein YjbI (442 aa).

The polypeptide is Putative protein YjbI (yjbI) (Escherichia coli (strain K12)).